The chain runs to 177 residues: uncharacterized protein (177 aa).

Residues 1–27 form a disordered region; that stretch reads MSHSRRAAPTQDQCHTPGFPTSRETSG.

This is an uncharacterized protein from Homo sapiens (Human).